The sequence spans 490 residues: Pup--protein ligase (490 aa).

Glu-9 lines the Mg(2+) pocket. Arg-53 is a binding site for ATP. A Mg(2+)-binding site is contributed by Tyr-55. The Proton acceptor role is filled by Asp-57. A Mg(2+)-binding site is contributed by Glu-63. Ser-66 is an ATP binding site. The interval 160–181 (KTHPNGGPVPGSTDPASSTGVP) is disordered. ATP is bound at residue Trp-441.

The protein belongs to the Pup ligase/Pup deamidase family. Pup-conjugating enzyme subfamily.

It catalyses the reaction ATP + [prokaryotic ubiquitin-like protein]-L-glutamate + [protein]-L-lysine = ADP + phosphate + N(6)-([prokaryotic ubiquitin-like protein]-gamma-L-glutamyl)-[protein]-L-lysine.. It participates in protein degradation; proteasomal Pup-dependent pathway. It functions in the pathway protein modification; protein pupylation. Its function is as follows. Catalyzes the covalent attachment of the prokaryotic ubiquitin-like protein modifier Pup to the proteasomal substrate proteins, thereby targeting them for proteasomal degradation. This tagging system is termed pupylation. The ligation reaction involves the side-chain carboxylate of the C-terminal glutamate of Pup and the side-chain amino group of a substrate lysine. The sequence is that of Pup--protein ligase from Rothia mucilaginosa (strain DY-18) (Stomatococcus mucilaginosus).